Reading from the N-terminus, the 116-residue chain is Large ribosomal subunit protein bL19 (116 aa).

This sequence belongs to the bacterial ribosomal protein bL19 family.

Functionally, this protein is located at the 30S-50S ribosomal subunit interface and may play a role in the structure and function of the aminoacyl-tRNA binding site. This Staphylococcus saprophyticus subsp. saprophyticus (strain ATCC 15305 / DSM 20229 / NCIMB 8711 / NCTC 7292 / S-41) protein is Large ribosomal subunit protein bL19.